A 178-amino-acid chain; its full sequence is MELEPRTVVLRLGHRRERDKRITTHVCLTARAFGAAGVLISGDHDESVIESVEDVVERWGGPFTVQWVGNWRRVIKDWKRSGGSVVHLTMYGLHIDDVIGELRGENELLVIVGAGKVPAEVFELSDYNVAIGHQPHSEVAALAVFLDRLYEGKELHREFERARLRVVPSEKGKKVERL.

Position 88 (leucine 88) interacts with S-adenosyl-L-methionine.

It belongs to the aTrm56 family. Homodimer.

It localises to the cytoplasm. The catalysed reaction is cytidine(56) in tRNA + S-adenosyl-L-methionine = 2'-O-methylcytidine(56) in tRNA + S-adenosyl-L-homocysteine + H(+). Its function is as follows. Specifically catalyzes the AdoMet-dependent 2'-O-ribose methylation of cytidine at position 56 in tRNAs. The sequence is that of tRNA (cytidine(56)-2'-O)-methyltransferase from Methanopyrus kandleri (strain AV19 / DSM 6324 / JCM 9639 / NBRC 100938).